The chain runs to 205 residues: Guanylate kinase (205 aa).

Residues 6–185 enclose the Guanylate kinase-like domain; it reads GLLIVLSGPS…ACERIKAIVV (180 aa). 13-20 lines the ATP pocket; sequence GPSGVGKG.

Belongs to the guanylate kinase family.

The protein resides in the cytoplasm. It catalyses the reaction GMP + ATP = GDP + ADP. Its function is as follows. Essential for recycling GMP and indirectly, cGMP. In Bacillus anthracis, this protein is Guanylate kinase.